The chain runs to 500 residues: NAD(P)H-quinone oxidoreductase chain 4, chloroplastic (500 aa).

15 consecutive transmembrane segments (helical) span residues 3–23 (FFPW…IILF), 37–57 (ICIC…HFQL), 87–107 (IGPI…AWPV), 113–130 (LFHF…GLFA), 134–154 (LLLF…LLSM), 167–187 (FILY…GVGL), 208–228 (ALEI…SPII), 242–262 (HYST…YGLI), 272–292 (AHSI…IYAA), 305–325 (IAYS…SIND), 330–350 (GAIL…FLAG), 364–384 (MGGI…FSMA), 386–406 (LALP…GIIT), 411–431 (LLIS…LTPI), and 462–482 (LFVS…PDFV).

The protein belongs to the complex I subunit 4 family.

The protein localises to the plastid. It localises to the chloroplast thylakoid membrane. It carries out the reaction a plastoquinone + NADH + (n+1) H(+)(in) = a plastoquinol + NAD(+) + n H(+)(out). The enzyme catalyses a plastoquinone + NADPH + (n+1) H(+)(in) = a plastoquinol + NADP(+) + n H(+)(out). This is NAD(P)H-quinone oxidoreductase chain 4, chloroplastic from Daucus carota (Wild carrot).